A 643-amino-acid chain; its full sequence is Manganese lipoxygenase (643 aa).

One can recognise a Lipoxygenase domain in the interval 166–643 (WYTDEVFAQQ…PEQLANAIVI (478 aa)). Residues His-325, His-330, His-510, Asn-514, and Ile-643 each coordinate Mn(2+).

The protein belongs to the lipoxygenase family. Mn(2+) serves as cofactor.

The catalysed reaction is (9Z,12Z)-octadecadienoate + O2 = (13S)-hydroperoxy-(9Z,11E)-octadecadienoate. Functionally, lipoxygenase that metabolizes linoleic and alpha-linolenic acids to 13S-hydroperoxy fatty acids. The chain is Manganese lipoxygenase from Pleurotus sapidus (Oyster mushroom).